Consider the following 377-residue polypeptide: Transcription factor ast-1 (377 aa).

The disordered stretch occupies residues 72–143 (PNRMLYNDNT…SNGSSSSTES (72 aa)). Composition is skewed to low complexity over residues 96-109 (STSA…TSSK) and 118-142 (TESS…SSTE). A DNA-binding region (ETS) is located at residues 214-294 (TQLWQFLLEL…HGKRYAYKFD (81 aa)).

This sequence belongs to the ETS family. In terms of tissue distribution, expressed in the A-neurons in the male-specific genital sensilla (simple sense organs) known as rays.

It localises to the nucleus. The protein localises to the cell projection. The protein resides in the neuron projection. Functionally, transcription factor. Probably binds to DNA sequences containing the consensus motif 5'-CGGA[AT][AG]-3'. Positively modulates expression of dopamine pathway genes, acting as a terminal selector for differentiation of dopaminergic neurons; may act in concert with homeobox proteins ceh-40, ceh-43 and ceh-20. Required for axon navigation in some interneurons, perhaps acting in the same pathways as basement membrane protein nid-1 and unc-6/netrin. Plays a role in the differentiation of the ventral cord pioneer neuron AVG. Required for morphogenesis of the pharynx. This is Transcription factor ast-1 from Caenorhabditis elegans.